Consider the following 529-residue polypeptide: Bifunctional purine biosynthesis protein PurH (529 aa).

In terms of domain architecture, MGS-like spans 1-148; the sequence is MQQRRPVRRA…KNHKDVAIVV (148 aa). The residue at position 287 (Lys-287) is an N6-acetyllysine.

It belongs to the PurH family.

The enzyme catalyses (6R)-10-formyltetrahydrofolate + 5-amino-1-(5-phospho-beta-D-ribosyl)imidazole-4-carboxamide = 5-formamido-1-(5-phospho-D-ribosyl)imidazole-4-carboxamide + (6S)-5,6,7,8-tetrahydrofolate. The catalysed reaction is IMP + H2O = 5-formamido-1-(5-phospho-D-ribosyl)imidazole-4-carboxamide. The protein operates within purine metabolism; IMP biosynthesis via de novo pathway; 5-formamido-1-(5-phospho-D-ribosyl)imidazole-4-carboxamide from 5-amino-1-(5-phospho-D-ribosyl)imidazole-4-carboxamide (10-formyl THF route): step 1/1. It participates in purine metabolism; IMP biosynthesis via de novo pathway; IMP from 5-formamido-1-(5-phospho-D-ribosyl)imidazole-4-carboxamide: step 1/1. The protein is Bifunctional purine biosynthesis protein PurH of Escherichia coli O157:H7.